The primary structure comprises 39 residues: Large ribosomal subunit protein bL36 (39 aa).

This sequence belongs to the bacterial ribosomal protein bL36 family.

In Lactiplantibacillus plantarum (strain ATCC BAA-793 / NCIMB 8826 / WCFS1) (Lactobacillus plantarum), this protein is Large ribosomal subunit protein bL36.